A 400-amino-acid chain; its full sequence is CCA-adding enzyme (400 aa).

ATP-binding residues include Gly27 and Arg30. Positions 27 and 30 each coordinate CTP. Mg(2+)-binding residues include Asp40 and Asp42. ATP is bound by residues Arg111, Asp154, Arg157, Arg160, and Arg163. Arg111, Asp154, Arg157, Arg160, and Arg163 together coordinate CTP.

Belongs to the tRNA nucleotidyltransferase/poly(A) polymerase family. Bacterial CCA-adding enzyme type 3 subfamily. In terms of assembly, homodimer. Mg(2+) serves as cofactor.

The enzyme catalyses a tRNA precursor + 2 CTP + ATP = a tRNA with a 3' CCA end + 3 diphosphate. The catalysed reaction is a tRNA with a 3' CCA end + 2 CTP + ATP = a tRNA with a 3' CCACCA end + 3 diphosphate. Functionally, catalyzes the addition and repair of the essential 3'-terminal CCA sequence in tRNAs without using a nucleic acid template. Adds these three nucleotides in the order of C, C, and A to the tRNA nucleotide-73, using CTP and ATP as substrates and producing inorganic pyrophosphate. tRNA 3'-terminal CCA addition is required both for tRNA processing and repair. Also involved in tRNA surveillance by mediating tandem CCA addition to generate a CCACCA at the 3' terminus of unstable tRNAs. While stable tRNAs receive only 3'-terminal CCA, unstable tRNAs are marked with CCACCA and rapidly degraded. In Bacillus pumilus (strain SAFR-032), this protein is CCA-adding enzyme.